The primary structure comprises 257 residues: Type III pantothenate kinase (257 aa).

6–13 (DVGNTNTV) serves as a coordination point for ATP. Residues Y100 and 107 to 110 (GADR) contribute to the substrate site. The active-site Proton acceptor is D109. K(+) is bound at residue D129. T132 is a binding site for ATP. A substrate-binding site is contributed by T185.

This sequence belongs to the type III pantothenate kinase family. As to quaternary structure, homodimer. NH4(+) serves as cofactor. The cofactor is K(+).

The protein localises to the cytoplasm. The enzyme catalyses (R)-pantothenate + ATP = (R)-4'-phosphopantothenate + ADP + H(+). The protein operates within cofactor biosynthesis; coenzyme A biosynthesis; CoA from (R)-pantothenate: step 1/5. Functionally, catalyzes the phosphorylation of pantothenate (Pan), the first step in CoA biosynthesis. The chain is Type III pantothenate kinase from Desulfatibacillum aliphaticivorans.